Here is a 628-residue protein sequence, read N- to C-terminus: E3 SUMO-protein ligase PIAS3 (628 aa).

The tract at residues 1 to 200 is interaction with CCAR2; that stretch reads MAELGELKHM…QLRFCLCETS (200 aa). One can recognise an SAP domain in the interval 11–45; that stretch reads VMSFRVSELQVLLGFAGRNKSGRKHELLAKALHLL. Residues 19–23 carry the LXXLL motif motif; the sequence is LQVLL. Residues lysine 46 and lysine 56 each participate in a glycyl lysine isopeptide (Lys-Gly) (interchain with G-Cter in SUMO2) cross-link. Residues 72-95 are disordered; that stretch reads PSDLSLLSLPPGTSPVGSPSPLAS. Residues 115–280 enclose the PINIT domain; that stretch reads MHPPLPQPVH…SLSVYLVRQL (166 aa). Residues lysine 230 and lysine 307 each participate in a glycyl lysine isopeptide (Lys-Gly) (interchain with G-Cter in SUMO2) cross-link. An SP-RING-type zinc finger spans residues 312–393; sequence PDSEVATTSL…FMEILNSCSD (82 aa). Residues cysteine 343, histidine 345, cysteine 366, and cysteine 369 each contribute to the Zn(2+) site. The tract at residues 450-460 is SUMO1-binding; sequence LTIESSSDEED. Glycyl lysine isopeptide (Lys-Gly) (interchain with G-Cter in SUMO2) cross-links involve residues lysine 466 and lysine 482. The interval 573–618 is disordered; the sequence is LAPTLGSSHRSATPAPAPGRVSSIVAPGSSLREGHGGPLPSGPSLT.

The protein belongs to the PIAS family. Binds SUMO1 and UBE2I. Interacts with AR, BCL11A, GFI1, HMGA2, IRF1, MITF, NCOA2, as well as with STAT3, after treatment with IL6, CNTF or OSM and with STAT5, after PRL stimulation. Interacts with PLAG1. Interacts with ZFHX3. Interacts with MTA1. Interacts with CCAR2 (via N-terminus). Interacts with TRIM8. Interacts with PRDM1. Sumoylated. Widely expressed, with highest levels in lung, kidney and spleen.

It is found in the cytoplasm. Its subcellular location is the nucleus. The protein resides in the nucleus speckle. It functions in the pathway protein modification; protein sumoylation. Its function is as follows. Functions as an E3-type small ubiquitin-like modifier (SUMO) ligase, stabilizing the interaction between UBE2I and the substrate, and as a SUMO-tethering factor. Plays a crucial role as a transcriptional coregulation in various cellular pathways, including the STAT pathway and the steroid hormone signaling pathway. The effects of this transcriptional coregulation, transactivation or silencing, may vary depending upon the biological context. Enhances the sumoylation of MTA1 and may participate in its paralog-selective sumoylation. Sumoylates CCAR2 which promotes its interaction with SIRT1. Diminishes the sumoylation of ZFHX3 by preventing the colocalization of ZFHX3 with SUMO1 in the nucleus. The chain is E3 SUMO-protein ligase PIAS3 (Pias3) from Rattus norvegicus (Rat).